An 81-amino-acid polypeptide reads, in one-letter code: Large ribosomal subunit protein bL31B (81 aa).

It belongs to the bacterial ribosomal protein bL31 family. Type B subfamily. In terms of assembly, part of the 50S ribosomal subunit.

In Limosilactobacillus reuteri (strain DSM 20016) (Lactobacillus reuteri), this protein is Large ribosomal subunit protein bL31B.